Here is a 238-residue protein sequence, read N- to C-terminus: MSNKDICVKISGSKKIREAREKVKSDTLYNLTNAVAQLKSASYVKFDPTLEIVMKLGIDPRHSDQIVRGVVNLPAGTGKTIRVAVICKEEREEEAKSAGADLVGSINIIDEIKAGQINFDVCIATPDMMSMISSVARILGPKGLMPNPKLGTVTLDIKNAIKNAKSGQVEYRAEKAGIIHAGLGKLSFSDQDLLKNLNAFIGAVIKAKPVGLKGNYLKAIYLSSTMGASVQIDLTSIS.

Belongs to the universal ribosomal protein uL1 family. In terms of assembly, part of the 50S ribosomal subunit.

Functionally, binds directly to 23S rRNA. The L1 stalk is quite mobile in the ribosome, and is involved in E site tRNA release. Its function is as follows. Protein L1 is also a translational repressor protein, it controls the translation of the L11 operon by binding to its mRNA. This is Large ribosomal subunit protein uL1 from Rickettsia prowazekii (strain Madrid E).